Here is a 701-residue protein sequence, read N- to C-terminus: Protein mono-ADP-ribosyltransferase PARP12 (701 aa).

3 C3H1-type zinc fingers span residues 94 to 119 (LCRF…HSLT), 150 to 179 (WLLP…IKLH), and 180 to 202 (ICQY…HDFS). A disordered region spans residues 234-268 (KNKSSAPSRVPPLFVPQGTSERKDSSGSVSPNTLS). Phosphoserine is present on Ser258. Residues 259 to 268 (SGSVSPNTLS) show a composition bias toward polar residues. 2 consecutive C3H1-type zinc fingers follow at residues 270-297 (EEGD…HFHL) and 271-296 (EGDQ…VHFH). 2 consecutive WWE domains span residues 298–361 (PYRW…RLST) and 364–458 (SVTK…KVCR). Cys474 is subject to ADP-ribosylcysteine. One can recognise a PARP catalytic domain in the interval 484–698 (IPDYWDSSAL…ILLALGSLFS (215 aa)). Asp600 and Asp611 each carry ADP-ribosyl aspartic acid.

It belongs to the ARTD/PARP family. Interacts with PARP11; this interaction plays a key role in zika virus suppression. Interacts with ISG15. In terms of processing, auto-mono-ADP-ribosylated. Post-translationally, phosphorylated by PRKD1.

It is found in the nucleus. The protein resides in the golgi apparatus. It localises to the trans-Golgi network. The protein localises to the cytoplasm. Its subcellular location is the stress granule. It catalyses the reaction L-aspartyl-[protein] + NAD(+) = 4-O-(ADP-D-ribosyl)-L-aspartyl-[protein] + nicotinamide. The enzyme catalyses L-cysteinyl-[protein] + NAD(+) = S-(ADP-D-ribosyl)-L-cysteinyl-[protein] + nicotinamide + H(+). Its function is as follows. Mono-ADP-ribosyltransferase that mediates mono-ADP-ribosylation of target proteins. Acts as an antiviral factor by cooperating with PARP11 to suppress Zika virus replication. Displays anti-alphavirus activity during IFN-gamma immune activation by directly ADP-ribosylating the alphaviral non-structural proteins nsP3 and nsP4. Acts as a component of the PRKD1-driven regulatory cascade that selectively controls a major branch of the basolateral transport pathway by catalyzing the MARylation of GOLGA1. Acts also as a key regulator of mitochondrial function, protein translation, and inflammation. Inhibits PINK1/Parkin-dependent mitophagy and promotes cartilage degeneration by inhibiting the ubiquitination and SUMOylation of MFN1/2 by upregulating ISG15 and ISGylation. In Homo sapiens (Human), this protein is Protein mono-ADP-ribosyltransferase PARP12.